The sequence spans 236 residues: Uridylate kinase (236 aa).

Lysine 10–glycine 13 is a binding site for ATP. A UMP-binding site is contributed by glycine 52. Glycine 53 and arginine 57 together coordinate ATP. UMP contacts are provided by residues aspartate 72 and threonine 133 to threonine 140. Residues threonine 160, tyrosine 166, and aspartate 169 each coordinate ATP.

This sequence belongs to the UMP kinase family. In terms of assembly, homohexamer.

The protein localises to the cytoplasm. The catalysed reaction is UMP + ATP = UDP + ADP. The protein operates within pyrimidine metabolism; CTP biosynthesis via de novo pathway; UDP from UMP (UMPK route): step 1/1. Its activity is regulated as follows. Inhibited by UTP. Its function is as follows. Catalyzes the reversible phosphorylation of UMP to UDP. This Parabacteroides distasonis (strain ATCC 8503 / DSM 20701 / CIP 104284 / JCM 5825 / NCTC 11152) protein is Uridylate kinase.